A 259-amino-acid chain; its full sequence is MNKINNNLEFNGNEDEHFIEYYNNKNYKSDLLKANKNNKTKNKKNSNFNFKSIEKNRLNYNNKKNKFILNRKAYYNSNENINCQSDIIYVEENITVNELASKIGVEATEILKVLFKKGKLLNINQILDLSLLNLISQELKINITTIDKKNNIYINTESNNDQNINDKHVKLRAPIVAVLGHVNHGKTSLIEKLIKNDLTKAETGHITQHIGAYEFIIGPKDKKIILLDTPGHEAFESIRQRVLKISDIILLIIAADEGI.

The 89-residue stretch at 171-259 (LRAPIVAVLG…LLIIAADEGI (89 aa)) folds into the tr-type G domain. Position 180–187 (180–187 (GHVNHGKT)) interacts with GTP.

It belongs to the TRAFAC class translation factor GTPase superfamily. Classic translation factor GTPase family. IF-2 subfamily.

The protein localises to the plastid. It localises to the chloroplast. Its function is as follows. One of the essential components for the initiation of protein synthesis. Protects formylmethionyl-tRNA from spontaneous hydrolysis and promotes its binding to the 30S ribosomal subunits. Also involved in the hydrolysis of GTP during the formation of the 70S ribosomal complex. The polypeptide is Translation initiation factor IF-2, chloroplastic (infB) (Galdieria sulphuraria (Red alga)).